A 450-amino-acid chain; its full sequence is UDP-N-acetylmuramoylalanine--D-glutamate ligase (450 aa).

119 to 125 (GSNGKTT) is an ATP binding site.

Belongs to the MurCDEF family.

It is found in the cytoplasm. It catalyses the reaction UDP-N-acetyl-alpha-D-muramoyl-L-alanine + D-glutamate + ATP = UDP-N-acetyl-alpha-D-muramoyl-L-alanyl-D-glutamate + ADP + phosphate + H(+). Its pathway is cell wall biogenesis; peptidoglycan biosynthesis. Cell wall formation. Catalyzes the addition of glutamate to the nucleotide precursor UDP-N-acetylmuramoyl-L-alanine (UMA). The protein is UDP-N-acetylmuramoylalanine--D-glutamate ligase of Bacillus cereus (strain ATCC 10987 / NRS 248).